Consider the following 372-residue polypeptide: MPNQHMLLLFNLLPVGSNISTWWNFGSMLLTCLALQTMTGFFLAIHYTANINLSFSSIVHITRDVPYGWMMQNLHAIGASMFFICIYIHIARGLYYGSFLNKNVWLSGTTLLIILMATAFFGYVLPWGQMSFWAATVITNLLTAVPYIGTELTNWLWGGFSINDPTLTRFFALHFILPFTIISMSSIHIMLLHTEGSSNPLGTNSDIDKIPFHPYHSHKDMLMLTIMMTALFIIMSFNPNIFNDPENFSKANPLVTPQHIKPEWYFLFAYGILRSIPNKLGGAVALVLSVTILMTMPFTHTSHMRSMAFRPLMQFMFWTLVTTFIMITWAATKPVEPPFTTIGQVTSILYFTFFIMNPLLGWLENKISITNM.

The next 4 helical transmembrane spans lie at F25–I45, W69–I90, W105–L125, and F170–M190. Heme b-binding residues include H75 and H89. Residues H174 and H188 each coordinate heme b. H193 lines the a ubiquinone pocket. 4 helical membrane-spanning segments follow: residues H218–N238, L280–H300, L312–T332, and F339–P358.

The protein belongs to the cytochrome b family. As to quaternary structure, the cytochrome bc1 complex contains 3 respiratory subunits (MT-CYB, CYC1 and UQCRFS1), 2 core proteins (UQCRC1 and UQCRC2) and probably 6 low-molecular weight proteins. Heme b serves as cofactor.

The protein resides in the mitochondrion inner membrane. Functionally, component of the ubiquinol-cytochrome c reductase complex (complex III or cytochrome b-c1 complex) that is part of the mitochondrial respiratory chain. The b-c1 complex mediates electron transfer from ubiquinol to cytochrome c. Contributes to the generation of a proton gradient across the mitochondrial membrane that is then used for ATP synthesis. The protein is Cytochrome b (MT-CYB) of Pantherophis bairdi (Baird's ratsnake).